The chain runs to 100 residues: UPF0473 protein lwe1514 (100 aa).

The protein belongs to the UPF0473 family.

The sequence is that of UPF0473 protein lwe1514 from Listeria welshimeri serovar 6b (strain ATCC 35897 / DSM 20650 / CCUG 15529 / CIP 8149 / NCTC 11857 / SLCC 5334 / V8).